The sequence spans 510 residues: Leucine-rich repeat protein lrrA (510 aa).

20 LRR repeats span residues 14–34 (YRKR…PPTI), 35–59 (GALQ…IGKL), 60–82 (SKVE…IGSL), 84–106 (TLKQ…NIGA), 107–130 (LKNL…ISNC), 132–152 (ALEY…EFGK), 153–176 (LYNL…ISGW), 177–200 (VKLE…CLLG), 202–222 (LSTL…LSSM), 224–245 (SLTN…LSNL), 246–270 (RQLK…LLSE), 272–292 (IELD…IATL), 293–315 (INLQ…VGNL), 316–340 (INLQ…IGKL), 341–363 (VNLK…IASM), 365–386 (ALKE…IGEL), 387–408 (SGLT…SFGN), 410–432 (SELQ…LDGL), 433–458 (KSCT…LIGL), and 460–478 (ILDV…IVMK).

The protein localises to the cytoplasm. Functionally, involved in cytoskeleton remodeling, which is needed for normal chemotactic aggregation and efficient cell sorting during multicellular morphogenesis. The chain is Leucine-rich repeat protein lrrA (lrrA) from Dictyostelium discoideum (Social amoeba).